The following is a 126-amino-acid chain: Ribonuclease P protein component (126 aa).

The protein belongs to the RnpA family. As to quaternary structure, consists of a catalytic RNA component (M1 or rnpB) and a protein subunit.

It catalyses the reaction Endonucleolytic cleavage of RNA, removing 5'-extranucleotides from tRNA precursor.. In terms of biological role, RNaseP catalyzes the removal of the 5'-leader sequence from pre-tRNA to produce the mature 5'-terminus. It can also cleave other RNA substrates such as 4.5S RNA. The protein component plays an auxiliary but essential role in vivo by binding to the 5'-leader sequence and broadening the substrate specificity of the ribozyme. This chain is Ribonuclease P protein component, found in Synechococcus sp. (strain JA-3-3Ab) (Cyanobacteria bacterium Yellowstone A-Prime).